Consider the following 271-residue polypeptide: Acetyl-coenzyme A carboxylase carboxyl transferase subunit alpha (271 aa).

The 247-residue stretch at 1–247 folds into the CoA carboxyltransferase C-terminal domain; it reads MSRELIRTAD…KKTILEALGE (247 aa).

It belongs to the AccA family. In terms of assembly, acetyl-CoA carboxylase is a heterohexamer composed of biotin carboxyl carrier protein (AccB), biotin carboxylase (AccC) and two subunits each of ACCase subunit alpha (AccA) and ACCase subunit beta (AccD).

The protein localises to the cytoplasm. The enzyme catalyses N(6)-carboxybiotinyl-L-lysyl-[protein] + acetyl-CoA = N(6)-biotinyl-L-lysyl-[protein] + malonyl-CoA. It participates in lipid metabolism; malonyl-CoA biosynthesis; malonyl-CoA from acetyl-CoA: step 1/1. Its function is as follows. Component of the acetyl coenzyme A carboxylase (ACC) complex. First, biotin carboxylase catalyzes the carboxylation of biotin on its carrier protein (BCCP) and then the CO(2) group is transferred by the carboxyltransferase to acetyl-CoA to form malonyl-CoA. The sequence is that of Acetyl-coenzyme A carboxylase carboxyl transferase subunit alpha from Clostridium perfringens (strain ATCC 13124 / DSM 756 / JCM 1290 / NCIMB 6125 / NCTC 8237 / Type A).